The chain runs to 98 residues: UPF0473 protein LAR_0522 (98 aa).

Belongs to the UPF0473 family.

The chain is UPF0473 protein LAR_0522 from Limosilactobacillus reuteri subsp. reuteri (strain JCM 1112) (Lactobacillus reuteri).